The primary structure comprises 342 residues: Ribosomal RNA small subunit methyltransferase C (342 aa).

It belongs to the methyltransferase superfamily. RsmC family. As to quaternary structure, monomer.

The protein resides in the cytoplasm. The catalysed reaction is guanosine(1207) in 16S rRNA + S-adenosyl-L-methionine = N(2)-methylguanosine(1207) in 16S rRNA + S-adenosyl-L-homocysteine + H(+). Functionally, specifically methylates the guanine in position 1207 of 16S rRNA in the 30S particle. This Salmonella enteritidis PT4 (strain P125109) protein is Ribosomal RNA small subunit methyltransferase C.